The sequence spans 887 residues: Alanine--tRNA ligase (887 aa).

4 residues coordinate Zn(2+): His-564, His-568, Cys-676, and His-680.

It belongs to the class-II aminoacyl-tRNA synthetase family. It depends on Zn(2+) as a cofactor.

Its subcellular location is the cytoplasm. It carries out the reaction tRNA(Ala) + L-alanine + ATP = L-alanyl-tRNA(Ala) + AMP + diphosphate. Catalyzes the attachment of alanine to tRNA(Ala) in a two-step reaction: alanine is first activated by ATP to form Ala-AMP and then transferred to the acceptor end of tRNA(Ala). Also edits incorrectly charged Ser-tRNA(Ala) and Gly-tRNA(Ala) via its editing domain. The protein is Alanine--tRNA ligase of Sinorhizobium medicae (strain WSM419) (Ensifer medicae).